The primary structure comprises 233 residues: Small ribosomal subunit protein uS2 (233 aa).

It belongs to the universal ribosomal protein uS2 family.

The polypeptide is Small ribosomal subunit protein uS2 (Clostridium perfringens (strain ATCC 13124 / DSM 756 / JCM 1290 / NCIMB 6125 / NCTC 8237 / Type A)).